The following is a 276-amino-acid chain: D-apionate oxidoisomerase (276 aa).

Residues G12–M14, E33, and D69 each bind NAD(+). Residues H114 and E184 each coordinate Zn(2+).

Belongs to the ApnO family. Zn(2+) serves as cofactor.

The enzyme catalyses D-apionate + NAD(+) = 3-oxoisoapionate + NADH + H(+). It participates in carbohydrate metabolism. Its function is as follows. Involved in catabolism of D-apiose. Catalyzes the conversion of D-apionate to 3-oxo-isoapionate. In Cupriavidus necator (strain ATCC 43291 / DSM 13513 / CCUG 52238 / LMG 8453 / N-1) (Ralstonia eutropha), this protein is D-apionate oxidoisomerase.